A 215-amino-acid polypeptide reads, in one-letter code: MATQNADVTDATDYKKPPAETEQKALTIQPRSNKAPSDEELVRIINAAQKRGLTPAAFVQAAIVFTMDKGATDSTIFTGKYNTFPMKSLALRCKDAGVPVHKLCYFYTKPAYANRRVANQPPARWTNENVPKANKWAAFDTFDALLDPYVVPSSVPYDEPTPEDRQVNEIFKKDNLSQAASRNQLLGTQASITRGRLNGAPALPNNGQYFIEAPQ.

The segment at 1-34 is disordered; sequence MATQNADVTDATDYKKPPAETEQKALTIQPRSNK. A compositionally biased stretch (basic and acidic residues) spans 12–23; the sequence is TDYKKPPAETEQ. The segment covering 24-34 has biased composition (polar residues); that stretch reads KALTIQPRSNK.

It belongs to the potexvirus capsid protein family.

It localises to the virion. Functionally, required for genome encapsidation. Forms ribonucleoprotein complexes along with TGB1 helicase and viral RNA. The sequence is that of Coat protein from Setaria italica (Foxtail millet).